The following is a 188-amino-acid chain: Elongation factor P (188 aa).

N6-(3,6-diaminohexanoyl)-5-hydroxylysine is present on lysine 34.

Belongs to the elongation factor P family. In terms of processing, may be beta-lysylated on the epsilon-amino group of Lys-34 by the combined action of EpmA and EpmB, and then hydroxylated on the C5 position of the same residue by EpmC (if this protein is present). Lysylation is critical for the stimulatory effect of EF-P on peptide-bond formation. The lysylation moiety may extend toward the peptidyltransferase center and stabilize the terminal 3-CCA end of the tRNA. Hydroxylation of the C5 position on Lys-34 may allow additional potential stabilizing hydrogen-bond interactions with the P-tRNA.

The protein localises to the cytoplasm. The protein operates within protein biosynthesis; polypeptide chain elongation. In terms of biological role, involved in peptide bond synthesis. Alleviates ribosome stalling that occurs when 3 or more consecutive Pro residues or the sequence PPG is present in a protein, possibly by augmenting the peptidyl transferase activity of the ribosome. Modification of Lys-34 is required for alleviation. In Xanthomonas oryzae pv. oryzae (strain MAFF 311018), this protein is Elongation factor P.